Reading from the N-terminus, the 119-residue chain is Large ribosomal subunit protein bL20 (119 aa).

It belongs to the bacterial ribosomal protein bL20 family.

Its function is as follows. Binds directly to 23S ribosomal RNA and is necessary for the in vitro assembly process of the 50S ribosomal subunit. It is not involved in the protein synthesizing functions of that subunit. In Shewanella amazonensis (strain ATCC BAA-1098 / SB2B), this protein is Large ribosomal subunit protein bL20.